A 494-amino-acid chain; its full sequence is Ubiquitin carboxyl-terminal hydrolase 14 (494 aa).

A Ubiquitin-like domain is found at 4–80 (YSVTVKWGKE…MMGSADALPE (77 aa)). Position 52 is a phosphothreonine (Thr-52). The region spanning 105–483 (CGLTNLGNTC…IAYVLLYGPR (379 aa)) is the USP domain. Cys-114 acts as the Nucleophile in catalysis. Phosphoserine occurs at positions 143 and 148. Thr-235 bears the Phosphothreonine mark. Phosphoserine occurs at positions 237, 302, and 432. Residue His-435 is the Proton acceptor of the active site. N6-acetyllysine is present on Lys-449.

The protein belongs to the peptidase C19 family. USP14/UBP6 subfamily. Homodimer (Potential). Associates with the 26S proteasome. Interacts with FANCC, CXCR4 and ERN1. Interacts with TRIM14; this interaction recruits USP14 to cleave ubiquitin chains of CGAS and KDM4D.

The protein resides in the cytoplasm. The protein localises to the cell membrane. The enzyme catalyses Thiol-dependent hydrolysis of ester, thioester, amide, peptide and isopeptide bonds formed by the C-terminal Gly of ubiquitin (a 76-residue protein attached to proteins as an intracellular targeting signal).. Proteasome-associated deubiquitinase which releases ubiquitin from the proteasome targeted ubiquitinated proteins. Ensures the regeneration of ubiquitin at the proteasome. Is a reversibly associated subunit of the proteasome and a large fraction of proteasome-free protein exists within the cell. Required for the degradation of the chemokine receptor CXCR4 which is critical for CXCL12-induced cell chemotaxis. Also serves as a physiological inhibitor of endoplasmic reticulum-associated degradation (ERAD) under the non-stressed condition by inhibiting the degradation of unfolded endoplasmic reticulum proteins via interaction with ERN1. Indispensable for synaptic development and function at neuromuscular junctions (NMJs). Plays a role in the innate immune defense against viruses by stabilizing the viral DNA sensor CGAS and thus inhibiting its autophagic degradation. Inhibits OPTN-mediated selective autophagic degradation of KDM4D and thereby negatively regulates H3K9me2 and H3K9me3. This chain is Ubiquitin carboxyl-terminal hydrolase 14 (USP14), found in Homo sapiens (Human).